A 479-amino-acid polypeptide reads, in one-letter code: mRNA export factor ICP27 homolog (479 aa).

A compositionally biased stretch (low complexity) spans 1–15 (MVPSQRLSRTSSISS). 2 disordered regions span residues 1 to 77 (MVPS…PSSV) and 91 to 210 (KKWD…NKPW). The span at 35–44 (TDCDLDPMEG) shows a compositional bias: acidic residues. The interval 61–146 (DEDPTPAHAI…TDESYGKRRH (86 aa)) is nuclear export signal and interaction with host NXF1. The segment at 127 to 130 (KRRR) is nuclear localization signal. Positions 132–142 (EVHGCTDESYG) are enriched in basic and acidic residues. Residues 143-145 (KRR) form a nuclear localization signal region. Zn(2+) contacts are provided by Cys-354, His-445, Cys-449, and Cys-454. The CHC2-type zinc-finger motif lies at 354–454 (CFLPNTRDYN…HTRDCRSASC (101 aa)).

It belongs to the HHV-1 ICP27 protein family. As to quaternary structure, interacts with host XPO1 and with the XPO1 export pathway components small GTPase RAN and nucleoporin NUP214. Interacts with host SPEN, OTT1 and OTT3. Interacts with host SRSF1, SRSF3, SRSF7 and SRPK1. Interacts with host DHX9; this interaction may have an inhibitory effect on virion production. Interacts (via N-terminus) with host NXF1; this interaction plays a role in mRNA export. In terms of processing, phosphorylated by cellular protein kinase CK2.

The protein resides in the host nucleus. It localises to the host cytoplasm. Functionally, promotes the nuclear export of a subset of early and late viral mRNAs by interacting with mRNAs and cellular export proteins. Additionally may prevent the establishment of cellular antiviral state, by acting as an alternative splicing factor for cellular RNAs such as STAT1, resulting in a STAT1 mRNA incapable of producing the STAT1alpha isoform. This is mRNA export factor ICP27 homolog from Homo sapiens (Human).